The following is a 374-amino-acid chain: MPTLNTSASPPTFFWANASGGSVLSADDAPMPVKFLALRLMVALAYGLVGAIGLLGNLAVLWVLSNCARRAPGPPSDTFVFNLALADLGLALTLPFWAAESALDFHWPFGGALCKMVLTATVLNVYASIFLITALSVARYWVVAMAAGPGTHLSLFWARIATLAVWAAAALVTVPTAVFGVEGEVCGVRLCLLRFPSRYWLGAYQLQRVVLAFMVPLGVITTSYLLLLAFLQRRQRRRQDSRVVARSVRILVASFFLCWFPNHVVTLWGVLVKFDLVPWNSTFYTIQTYVFPVTTCLAHSNSCLNPVLYCLLRREPRQALAGTFRDLRLRLWPQGGGWVQQVALKQVGRRWVASNPRESRPSTLLTNLDRGTPG.

Residues 1–43 (MPTLNTSASPPTFFWANASGGSVLSADDAPMPVKFLALRLMVA) lie on the Extracellular side of the membrane. Asparagine 5 and asparagine 17 each carry an N-linked (GlcNAc...) asparagine glycan. Residues 44 to 64 (LAYGLVGAIGLLGNLAVLWVL) form a helical membrane-spanning segment. The Cytoplasmic segment spans residues 65–78 (SNCARRAPGPPSDT). The helical transmembrane segment at 79-99 (FVFNLALADLGLALTLPFWAA) threads the bilayer. Topologically, residues 100-116 (ESALDFHWPFGGALCKM) are extracellular. An intrachain disulfide couples cysteine 114 to cysteine 191. A helical transmembrane segment spans residues 117–137 (VLTATVLNVYASIFLITALSV). Residues 138-154 (ARYWVVAMAAGPGTHLS) lie on the Cytoplasmic side of the membrane. Residues 155–175 (LFWARIATLAVWAAAALVTVP) form a helical membrane-spanning segment. At 176-209 (TAVFGVEGEVCGVRLCLLRFPSRYWLGAYQLQRV) the chain is on the extracellular side. A helical transmembrane segment spans residues 210–230 (VLAFMVPLGVITTSYLLLLAF). Over 231 to 249 (LQRRQRRRQDSRVVARSVR) the chain is Cytoplasmic. Residues 250–270 (ILVASFFLCWFPNHVVTLWGV) form a helical membrane-spanning segment. Over 271–281 (LVKFDLVPWNS) the chain is Extracellular. A helical transmembrane segment spans residues 282–302 (TFYTIQTYVFPVTTCLAHSNS). Residues 303 to 374 (CLNPVLYCLL…LTNLDRGTPG (72 aa)) lie on the Cytoplasmic side of the membrane.

This sequence belongs to the G-protein coupled receptor 1 family. As to expression, expressed in a broader range of tissues including brain, kidney, testis, thymus, placenta, prostate, salivary gland, thyroid and colon.

It is found in the cell membrane. Functionally, high affinity receptor for INSL5. Also acts as a receptor for RLN3/relaxin-3, as well as bradykinin and kallidin. Binding of the ligand inhibit cAMP accumulation. The polypeptide is Relaxin-3 receptor 2 (RXFP4) (Homo sapiens (Human)).